The following is a 471-amino-acid chain: 3-isopropylmalate dehydratase large subunit (471 aa).

Residues cysteine 347, cysteine 407, and cysteine 410 each contribute to the [4Fe-4S] cluster site. The disordered stretch occupies residues 417 to 443; the sequence is TLQPGERSASTSNRNFEGRQGKGGRTH.

The protein belongs to the aconitase/IPM isomerase family. LeuC type 1 subfamily. As to quaternary structure, heterodimer of LeuC and LeuD. The cofactor is [4Fe-4S] cluster.

The enzyme catalyses (2R,3S)-3-isopropylmalate = (2S)-2-isopropylmalate. It functions in the pathway amino-acid biosynthesis; L-leucine biosynthesis; L-leucine from 3-methyl-2-oxobutanoate: step 2/4. Its function is as follows. Catalyzes the isomerization between 2-isopropylmalate and 3-isopropylmalate, via the formation of 2-isopropylmaleate. The sequence is that of 3-isopropylmalate dehydratase large subunit from Nocardioides sp. (strain ATCC BAA-499 / JS614).